The sequence spans 562 residues: AT-rich interactive domain-containing protein 1 (562 aa).

The ARID domain occupies 43–136; the sequence is KELISLFRPL…YLDAFGRWLN (94 aa). One can recognise an ELM2 domain in the interval 358–448; sequence PCALVGSKFQ…KLELGPAFYM (91 aa).

It localises to the nucleus. The polypeptide is AT-rich interactive domain-containing protein 1 (ARID1) (Arabidopsis thaliana (Mouse-ear cress)).